A 90-amino-acid chain; its full sequence is Small ribosomal subunit protein bS20 (90 aa).

The span at 1–15 (MANHKSAQKRIRQTK) shows a compositional bias: basic residues. Residues 1–22 (MANHKSAQKRIRQTKTRTERNR) form a disordered region.

The protein belongs to the bacterial ribosomal protein bS20 family.

In terms of biological role, binds directly to 16S ribosomal RNA. The protein is Small ribosomal subunit protein bS20 of Helicobacter hepaticus (strain ATCC 51449 / 3B1).